The chain runs to 258 residues: UPF0246 protein YPK_3600 (258 aa).

The protein belongs to the UPF0246 family.

In Yersinia pseudotuberculosis serotype O:3 (strain YPIII), this protein is UPF0246 protein YPK_3600.